The chain runs to 274 residues: Large ribosomal subunit protein uL2 (274 aa).

2 disordered regions span residues 28–55 (APHAPLLEKKSKSGGRNNNGRITTRHVG) and 224–274 (VAMN…RRRK). Residues 263–274 (KRTDKMIVRRRK) show a composition bias toward basic and acidic residues.

The protein belongs to the universal ribosomal protein uL2 family. Part of the 50S ribosomal subunit. Forms a bridge to the 30S subunit in the 70S ribosome.

Functionally, one of the primary rRNA binding proteins. Required for association of the 30S and 50S subunits to form the 70S ribosome, for tRNA binding and peptide bond formation. It has been suggested to have peptidyltransferase activity; this is somewhat controversial. Makes several contacts with the 16S rRNA in the 70S ribosome. This is Large ribosomal subunit protein uL2 from Pseudomonas fluorescens (strain ATCC BAA-477 / NRRL B-23932 / Pf-5).